A 61-amino-acid chain; its full sequence is UPF0434 protein PFLU_3771 (61 aa).

Belongs to the UPF0434 family.

The protein is UPF0434 protein PFLU_3771 of Pseudomonas fluorescens (strain SBW25).